The chain runs to 118 residues: UPF0102 protein CHY_1414 (118 aa).

This sequence belongs to the UPF0102 family.

In Carboxydothermus hydrogenoformans (strain ATCC BAA-161 / DSM 6008 / Z-2901), this protein is UPF0102 protein CHY_1414.